A 115-amino-acid chain; its full sequence is MNIKDIGVIISKKPLKENTFIIRVFTKNHGLYSGVIKESSKKNKFIYQEGNIVDFLWKARLHEHIGIAKCELIKSYTGYFIINKAKLYAFNSVISLIQELFHEREEHSIFFFISN.

This is an uncharacterized protein from Rickettsia prowazekii (strain Madrid E).